The chain runs to 1426 residues: ABC transporter G family member 31 (1426 aa).

Residues 142–415 form the ABC transporter 1 domain; it reads LRHLRIYRGG…FAGMGFRCPE (274 aa). 175 to 182 contacts ATP; that stretch reads GPPSSGKT. Residues 493–706 form the ABC transmembrane type-2 1 domain; it reads ELLKSNFQWQ…AQNAISVNEF (214 aa). 7 helical membrane passes run 511-531, 544-564, 592-612, 630-650, 655-675, 681-701, and 741-761; these read FIYV…MTVF, GIIY…NGFT, LPSW…WVLV, FLLL…MASL, IVAN…GGFI, IPAW…QNAI, and IGVG…TLFL. In terms of domain architecture, ABC transporter 2 spans 824–1076; sequence MCFKNINYYV…NLVEFFEAIP (253 aa). 869–876 lines the ATP pocket; it reads GVSGAGKT. The ABC transmembrane type-2 2 domain occupies 1149 to 1363; the sequence is AQYAACLWKQ…TLYGLLTSQF (215 aa). Helical transmembrane passes span 1168–1188, 1200–1220, 1245–1265, 1283–1303, 1313–1333, 1341–1363, and 1398–1418; these read YTAV…TICW, IFNA…TNAT, LPFA…QSLI, FLWY…YGMM, VAPI…GFMI, WWRW…TSQF, and VVAG…ALAI.

Belongs to the ABC transporter superfamily. ABCG family. PDR (TC 3.A.1.205) subfamily.

The protein localises to the membrane. May be a general defense protein. The chain is ABC transporter G family member 31 from Oryza sativa subsp. japonica (Rice).